The following is a 126-amino-acid chain: Protein ApaG (126 aa).

Residues 2–126 form the ApaG domain; it reads SALDTSIRVE…FRLATPGLLH (125 aa).

This chain is Protein ApaG, found in Shewanella sp. (strain W3-18-1).